Here is a 257-residue protein sequence, read N- to C-terminus: Transmembrane protein 101 (257 aa).

Transmembrane regions (helical) follow at residues 24–40, 52–72, 77–97, 110–130, 139–159, 182–202, 206–226, and 233–253; these read TRCPFWGCFSQLMLYAE, VPYLYFDMGAAVLCASFMSFG, WFALGAALQLAISTYTAYIGG, YSRTVAIIGGFLVLASGAGEL, SLQSTGQVFLGIYLICVAYSL, LFFVLYGVLALAFLSGYYVTL, ILAVLLPPVMLLIDGNVSYWH, and FWNQMKLLGESVGIFGAAVIL.

It localises to the membrane. Its function is as follows. May activate NF-kappa-B signaling pathways. The sequence is that of Transmembrane protein 101 (Tmem101) from Mus musculus (Mouse).